The primary structure comprises 165 residues: Free methionine-R-sulfoxide reductase (165 aa).

A GAF domain is found at 49-149; the sequence is LLEDDTLVLG…LRQLVAQLEK (101 aa).

The protein belongs to the free Met sulfoxide reductase family.

It catalyses the reaction [thioredoxin]-disulfide + L-methionine + H2O = L-methionine (R)-S-oxide + [thioredoxin]-dithiol. Catalyzes the reversible oxidation-reduction of the R-enantiomer of free methionine sulfoxide to methionine. Specific for free L-methionine-(R)-S-oxide. This Escherichia coli (strain K12) protein is Free methionine-R-sulfoxide reductase (msrC).